A 134-amino-acid chain; its full sequence is Large ribosomal subunit protein bL21 (134 aa).

It belongs to the bacterial ribosomal protein bL21 family. As to quaternary structure, part of the 50S ribosomal subunit. Contacts protein L20.

In terms of biological role, this protein binds to 23S rRNA in the presence of protein L20. This chain is Large ribosomal subunit protein bL21, found in Pelagibacter ubique (strain HTCC1062).